The sequence spans 156 residues: ATP synthase subunit b (156 aa).

The chain crosses the membrane as a helical span at residues 12 to 32 (VAFLIFVLFCMKFVWPPVIAA).

The protein belongs to the ATPase B chain family. As to quaternary structure, F-type ATPases have 2 components, F(1) - the catalytic core - and F(0) - the membrane proton channel. F(1) has five subunits: alpha(3), beta(3), gamma(1), delta(1), epsilon(1). F(0) has three main subunits: a(1), b(2) and c(10-14). The alpha and beta chains form an alternating ring which encloses part of the gamma chain. F(1) is attached to F(0) by a central stalk formed by the gamma and epsilon chains, while a peripheral stalk is formed by the delta and b chains.

Its subcellular location is the cell inner membrane. Its function is as follows. F(1)F(0) ATP synthase produces ATP from ADP in the presence of a proton or sodium gradient. F-type ATPases consist of two structural domains, F(1) containing the extramembraneous catalytic core and F(0) containing the membrane proton channel, linked together by a central stalk and a peripheral stalk. During catalysis, ATP synthesis in the catalytic domain of F(1) is coupled via a rotary mechanism of the central stalk subunits to proton translocation. Functionally, component of the F(0) channel, it forms part of the peripheral stalk, linking F(1) to F(0). The protein is ATP synthase subunit b of Pseudomonas fluorescens (strain Pf0-1).